The following is a 430-amino-acid chain: Leucoanthocyanidin dioxygenase (430 aa).

In terms of domain architecture, Fe2OG dioxygenase spans 212–311; sequence LLLQMKINYY…RFSWAIFCEP (100 aa). Positions 236, 238, and 292 each coordinate Fe cation. 2 stretches are compositionally biased toward basic and acidic residues: residues 376–407 and 415–430; these read KKDN…KEDG and KVFK…EESK. A disordered region spans residues 376–430; sequence KKDNQDAVAENKDIKEDEQCGPAEHKDIKEDGQGAAAENKVFKENNQDVAAEESK.

Belongs to the iron/ascorbate-dependent oxidoreductase family. Fe cation is required as a cofactor. It depends on L-ascorbate as a cofactor. As to expression, predominantly expressed in corollas and at lower levels in anthers.

It catalyses the reaction a (2R,3S,4S)-leucoanthocyanidin + 2-oxoglutarate + O2 = a 4-H-anthocyanidin with a 3-hydroxy group + succinate + CO2 + 2 H2O. The protein operates within pigment biosynthesis; anthocyanin biosynthesis. Its function is as follows. Oxidation of leucoanthocyanidins into anthocyanidins. This is Leucoanthocyanidin dioxygenase (ANT17) from Petunia hybrida (Petunia).